The chain runs to 348 residues: MQRLVVWDPVCLPLPPPPPAFKSMEVANFYYEADCLAAAYGGKAAPAAPPADRPGPRPPTGELGSIGEHERAIDFSPYLEPLGAPQAPAPTTASDTFEAAPSAPAPVPASSGQHHDFLSDLFSDDYGGKNCKKAAEYGYVSLGRLGAAKGALHPGCFAPLHPPPPPPPPPAELKAEPGFEPADCKRKEEAGAPGGGAAGMAAGFPYALRAYLGYQAVPSGSSGSLSTSSSSSPPGTPSPADAKATPAAAACYAGAAPAPSQVKSKAKKTVDKHSDEYKIRRERNNIAVRKSRDKAKMRNLETQHKVLELTGENERLQKKVEQLSREVSTLRNLFKTLPEPLLASSGHC.

The tract at residues 1–24 (MQRLVVWDPVCLPLPPPPPAFKSM) is required for Lys-174 sumoylation. An Asymmetric dimethylarginine; by CARM1 modification is found at arginine 3. The required for MYC transcriptional repression stretch occupies residues 24–135 (MEVANFYYEA…YGGKNCKKAA (112 aa)). Lysine 43 carries the N6-acetyllysine; alternate modification. Lysine 43 is modified (N6-methylated lysine; alternate). Disordered stretches follow at residues 44 to 65 (AAPA…ELGS) and 79 to 112 (LEPL…ASSG). The span at 47 to 59 (AAPPADRPGPRPP) shows a compositional bias: pro residues. Positions 116 to 124 (DFLSDLFSD) match the 9aaTAD motif. 2 positions are modified to N6-acetyllysine; by KAT2A and KAT2B: lysine 129 and lysine 132. Lysine 133 carries the N6-acetyllysine; by KAT2A and KAT2B; alternate modification. Residue lysine 133 forms a Glycyl lysine isopeptide (Lys-Gly) (interchain with G-Cter in SUMO2); alternate linkage. The tract at residues 158–178 (APLHPPPPPPPPPAELKAEPG) is disordered. A compositionally biased stretch (pro residues) spans 160-171 (LHPPPPPPPPPA). Lysine 174 is covalently cross-linked (Glycyl lysine isopeptide (Lys-Gly) (interchain with G-Cter in SUMO2); alternate). Residue lysine 174 forms a Glycyl lysine isopeptide (Lys-Gly) (interchain with G-Cter in SUMO); alternate linkage. Residues lysine 185 and lysine 187 each participate in a glycyl lysine isopeptide (Lys-Gly) (interchain with G-Cter in SUMO2) cross-link. Residues 219–259 (SGSSGSLSTSSSSSPPGTPSPADAKATPAAAACYAGAAPAP) show a composition bias toward low complexity. A disordered region spans residues 219–277 (SGSSGSLSTSSSSSPPGTPSPADAKATPAAAACYAGAAPAPSQVKSKAKKTVDKHSDEY). Position 227 is a phosphothreonine; by GSK3-beta (threonine 227). Serine 228 and serine 229 each carry an O-linked (GlcNAc) serine glycan. Serine 232 is subject to Phosphoserine; by GSK3-beta. Phosphothreonine; by RPS6KA1, CDK2 and MAPK is present on threonine 236. Residues lysine 263 and lysine 265 each participate in a glycyl lysine isopeptide (Lys-Gly) (interchain with G-Cter in SUMO2) cross-link. Positions 268–277 (KTVDKHSDEY) are enriched in basic and acidic residues. A Phosphothreonine; by RPS6KA1 and PKC/PRKCA modification is found at threonine 269. Residues 274–337 (SDEYKIRRER…STLRNLFKTL (64 aa)) enclose the bZIP domain. Positions 278-298 (KIRRERNNIAVRKSRDKAKMR) are basic motif. Position 291 is a phosphoserine; by PKC/PRKCA (serine 291). The leucine-zipper stretch occupies residues 300–307 (LETQHKVL). Phosphoserine; by CaMK2 is present on serine 328. Lysine 335 participates in a covalent cross-link: Glycyl lysine isopeptide (Lys-Gly) (interchain with G-Cter in SUMO2).

This sequence belongs to the bZIP family. C/EBP subfamily. In terms of assembly, binds DNA as a homodimer and as a heterodimer. Interacts with ATF4. Binds DNA as a heterodimer with ATF4. Interacts with MYB; within the complex, MYB and CEBPB bind to different promoter regions. Can form stable heterodimers with CEBPA, CEBPD and CEBPG. Interacts with SIX1. Interacts with TRIM28 and PTGES2. Interacts with PRDM16. Interacts with CCDC85B. Forms a complex with THOC5. Interacts with ZNF638; this interaction increases transcriptional activation. Interacts with CIDEA and CIDEC; these interactions increase transcriptional activation of a subset of CEBPB downstream target genes. Interacts with DDIT3/CHOP. Interacts with EP300; recruits EP300 to chromatin. Interacts with RORA; the interaction disrupts interaction with EP300. Interacts (not methylated) with MED23, MED26, SMARCA2, SMARCB1 and SMARCC1. Interacts with KAT2A and KAT2B. Interacts with ATF5; EP300 is required for ATF5 and CEBPB interaction and DNA binding. Interacts with NFE2L1; the heterodimer represses expression of DSPP during odontoblast differentiation. In terms of processing, methylated. Methylation at Arg-3 by CARM1 and at Lys-43 by EHMT2 inhibit transactivation activity. Methylation is probably inhibited by phosphorylation at Thr-236. Post-translationally, sumoylated by polymeric chains of SUMO2 or SUMO3. Sumoylation at Lys-174 is required for inhibition of T-cells proliferation. In adipocytes, sumoylation at Lys-174 by PIAS1 leads to ubiquitination and subsequent proteasomal degradation. Desumoylated by SENP2, which abolishes ubiquitination and stabilizes protein levels. Ubiquitinated, leading to proteasomal degradation. In terms of processing, phosphorylated at Thr-236 by MAPK and CDK2, serves to prime phosphorylation at Thr-227 and Ser-232 by GSK3B and acquire DNA-binding as well as transactivation activities, required to induce adipogenesis. MAPK and CDK2 act sequentially to maintain Thr-236 in the primed phosphorylated state during mitotical cloning expansion and thereby progression of terminal differentiation. Phosphorylation at Thr-269 enhances transactivation activity. Phosphorylation at Ser-328 in response to calcium increases transactivation activity. Phosphorylated at Thr-236 by RPS6KA1. Post-translationally, O-glycosylated, glycosylation at Ser-228 and Ser-229 prevents phosphorylation on Thr-236, Ser-232 and Thr-227 and DNA binding activity which delays the adipocyte differentiation program. Acetylated. Acetylation at Lys-43 is an important and dynamic regulatory event that contributes to its ability to transactivate target genes, including those associated with adipogenesis and adipocyte function. Deacetylation by HDAC1 represses its transactivation activity. Acetylated by KAT2A and KAT2B within a cluster of lysine residues between amino acids 129-133, this acetylation is strongly induced by glucocorticoid treatment and enhances transactivation activity.

The protein localises to the nucleus. It is found in the cytoplasm. In terms of biological role, important transcription factor regulating the expression of genes involved in immune and inflammatory responses. Also plays a significant role in adipogenesis, as well as in the gluconeogenic pathway, liver regeneration, and hematopoiesis. The consensus recognition site is 5'-T[TG]NNGNAA[TG]-3'. Its functional capacity is governed by protein interactions and post-translational protein modifications. During early embryogenesis, plays essential and redundant roles with CEBPA. Has a promitotic effect on many cell types such as hepatocytes and adipocytes but has an antiproliferative effect on T-cells by repressing MYC expression, facilitating differentiation along the T-helper 2 lineage. Binds to regulatory regions of several acute-phase and cytokines genes and plays a role in the regulation of acute-phase reaction and inflammation. Also plays a role in intracellular bacteria killing. During adipogenesis, is rapidly expressed and, after activation by phosphorylation, induces CEBPA and PPARG, which turn on the series of adipocyte genes that give rise to the adipocyte phenotype. The delayed transactivation of the CEBPA and PPARG genes by CEBPB appears necessary to allow mitotic clonal expansion and thereby progression of terminal differentiation. Essential for female reproduction because of a critical role in ovarian follicle development. Restricts osteoclastogenesis: together with NFE2L1; represses expression of DSPP during odontoblast differentiation. The chain is CCAAT/enhancer-binding protein beta (CEBPB) from Bos taurus (Bovine).